Consider the following 310-residue polypeptide: Cytochrome f (310 aa).

Residues 1 to 27 form the signal peptide; sequence MRRILTFFLGSIIIGLSIIISPSSSFA. Residues tyrosine 28, cysteine 48, cysteine 51, and histidine 52 each contribute to the heme site. Residues 277-297 form a helical membrane-spanning segment; sequence VIGLIAFFAGVALTQILLVLK.

It belongs to the cytochrome f family. As to quaternary structure, the 4 large subunits of the cytochrome b6-f complex are cytochrome b6, subunit IV (17 kDa polypeptide, PetD), cytochrome f and the Rieske protein, while the 4 small subunits are PetG, PetL, PetM and PetN. The complex functions as a dimer. Heme is required as a cofactor.

Its subcellular location is the cellular thylakoid membrane. Its function is as follows. Component of the cytochrome b6-f complex, which mediates electron transfer between photosystem II (PSII) and photosystem I (PSI), cyclic electron flow around PSI, and state transitions. The protein is Cytochrome f of Prochlorococcus marinus (strain SARG / CCMP1375 / SS120).